Reading from the N-terminus, the 146-residue chain is Hemoglobin subunit beta (146 aa).

Residue Val-1 is modified to N-acetylvaline. A Globin domain is found at 2–146; that stretch reads HLTADEKAAV…VATALAHKYH (145 aa). The residue at position 44 (Ser-44) is a Phosphoserine. Lys-59 carries the post-translational modification N6-acetyllysine. His-63 provides a ligand contact to heme b. Lys-82 carries the N6-acetyllysine modification. His-92 is a binding site for heme b. S-nitrosocysteine is present on Cys-93. At Lys-144 the chain carries N6-acetyllysine.

It belongs to the globin family. Heterotetramer of two alpha chains and two beta chains. In terms of tissue distribution, red blood cells.

In terms of biological role, involved in oxygen transport from the lung to the various peripheral tissues. The polypeptide is Hemoglobin subunit beta (HBB) (Myotis velifer (Mouse-eared bat)).